The following is a 453-amino-acid chain: MSDVSTQSPKVGFVSLGCPKALVDSEQIITQLRAEGYEISGTYGGADLVVVNTCGFIDEAVQESLDAIGEALAENGKVIVTGCLGAKKDAAGQDIITSVHPKVLAVTGPHALGEVMEAVHTHLPKPHDPFIDLVPPQGIKLTPKHYAYLKISEGCNHRCSFCIIPSMRGDLVSRPVAEVMLEAENLLKAGVKELLVISQDTSAYGVDVKFRTGFWNGRPLKTRMTELVGALGELAAQYGAWVRLHYVYPYPSVDEVMPLMAEGKVLPYLDVPLQHAHPEVLKRMKRPANAEKTLDRIRAWREVCPELTIRSTFIAGFPGETEEEFQTLLDFIAEAELDRVGCFAYSPVEGATANDLPGALPDEVREERRARFMEVAERVSARRLQRKVGKTLRVLVDEVNQDGGIGRSSADAPEIDGLVYIAPPSKPYKRYKAGDFVSVKITGADGHDLWGEV.

Positions 9–124 constitute an MTTase N-terminal domain; the sequence is PKVGFVSLGC…VMEAVHTHLP (116 aa). Residues Cys-18, Cys-54, Cys-83, Cys-155, Cys-159, and Cys-162 each coordinate [4Fe-4S] cluster. The Radical SAM core domain maps to 141–382; that stretch reads LTPKHYAYLK…MEVAERVSAR (242 aa). Positions 385–453 constitute a TRAM domain; that stretch reads QRKVGKTLRV…ADGHDLWGEV (69 aa).

Belongs to the methylthiotransferase family. RimO subfamily. [4Fe-4S] cluster is required as a cofactor.

The protein localises to the cytoplasm. The enzyme catalyses L-aspartate(89)-[ribosomal protein uS12]-hydrogen + (sulfur carrier)-SH + AH2 + 2 S-adenosyl-L-methionine = 3-methylsulfanyl-L-aspartate(89)-[ribosomal protein uS12]-hydrogen + (sulfur carrier)-H + 5'-deoxyadenosine + L-methionine + A + S-adenosyl-L-homocysteine + 2 H(+). Functionally, catalyzes the methylthiolation of an aspartic acid residue of ribosomal protein uS12. In Ralstonia nicotianae (strain ATCC BAA-1114 / GMI1000) (Ralstonia solanacearum), this protein is Ribosomal protein uS12 methylthiotransferase RimO.